The primary structure comprises 346 residues: Methylthioribose-1-phosphate isomerase 1 (346 aa).

Residues 48–50, arginine 91, and glutamine 196 contribute to the substrate site; that span reads RGA. The active-site Proton donor is aspartate 237. 247 to 248 lines the substrate pocket; the sequence is NK.

This sequence belongs to the eIF-2B alpha/beta/delta subunits family. MtnA subfamily.

It catalyses the reaction 5-(methylsulfanyl)-alpha-D-ribose 1-phosphate = 5-(methylsulfanyl)-D-ribulose 1-phosphate. It participates in amino-acid biosynthesis; L-methionine biosynthesis via salvage pathway; L-methionine from S-methyl-5-thio-alpha-D-ribose 1-phosphate: step 1/6. Catalyzes the interconversion of methylthioribose-1-phosphate (MTR-1-P) into methylthioribulose-1-phosphate (MTRu-1-P). The protein is Methylthioribose-1-phosphate isomerase 1 of Pseudothermotoga lettingae (strain ATCC BAA-301 / DSM 14385 / NBRC 107922 / TMO) (Thermotoga lettingae).